The sequence spans 359 residues: Peptide chain release factor 1 (359 aa).

Residue glutamine 235 is modified to N5-methylglutamine. The disordered stretch occupies residues 284-311; sequence KAESERSASRKNQVGSGDRSERIRTYNF.

It belongs to the prokaryotic/mitochondrial release factor family. Methylated by PrmC. Methylation increases the termination efficiency of RF1.

It localises to the cytoplasm. Its function is as follows. Peptide chain release factor 1 directs the termination of translation in response to the peptide chain termination codons UAG and UAA. The chain is Peptide chain release factor 1 from Bartonella quintana (strain Toulouse) (Rochalimaea quintana).